A 130-amino-acid polypeptide reads, in one-letter code: T-cell receptor alpha chain V region PHDS58 (130 aa).

The signal sequence occupies residues 1 to 20; sequence MLLALLPVLGIHFVLRDAQA. The interval 21–114 is v segment; it reads QSVTQPDARV…SAVYFCAVSG (94 aa). N-linked (GlcNAc...) asparagine glycosylation is present at Asn90. The interval 115 to 130 is j segment; the sequence is FASALTFGSGTKVIVL.

The sequence is that of T-cell receptor alpha chain V region PHDS58 from Mus musculus (Mouse).